Here is a 1555-residue protein sequence, read N- to C-terminus: Glycogen debranching enzyme (1555 aa).

Phosphoserine is present on S87. Active-site residues include D549, H552, and D650.

This sequence belongs to the glycogen debranching enzyme family. As to quaternary structure, monomer. Interacts with NHLRC1/malin. Post-translationally, the N-terminus is blocked. Ubiquitinated.

It is found in the cytoplasm. The enzyme catalyses Transfers a segment of a (1-&gt;4)-alpha-D-glucan to a new position in an acceptor, which may be glucose or a (1-&gt;4)-alpha-D-glucan.. It carries out the reaction Hydrolysis of (1-&gt;6)-alpha-D-glucosidic branch linkages in glycogen phosphorylase limit dextrin.. Its function is as follows. Multifunctional enzyme acting as 1,4-alpha-D-glucan:1,4-alpha-D-glucan 4-alpha-D-glycosyltransferase and amylo-1,6-glucosidase in glycogen degradation. In Oryctolagus cuniculus (Rabbit), this protein is Glycogen debranching enzyme (AGL).